Here is a 343-residue protein sequence, read N- to C-terminus: S-adenosylmethionine:tRNA ribosyltransferase-isomerase (343 aa).

This sequence belongs to the QueA family. Monomer.

Its subcellular location is the cytoplasm. It carries out the reaction 7-aminomethyl-7-carbaguanosine(34) in tRNA + S-adenosyl-L-methionine = epoxyqueuosine(34) in tRNA + adenine + L-methionine + 2 H(+). Its pathway is tRNA modification; tRNA-queuosine biosynthesis. Functionally, transfers and isomerizes the ribose moiety from AdoMet to the 7-aminomethyl group of 7-deazaguanine (preQ1-tRNA) to give epoxyqueuosine (oQ-tRNA). In Syntrophotalea carbinolica (strain DSM 2380 / NBRC 103641 / GraBd1) (Pelobacter carbinolicus), this protein is S-adenosylmethionine:tRNA ribosyltransferase-isomerase.